Reading from the N-terminus, the 124-residue chain is Small ribosomal subunit protein uS12 (124 aa).

Asp89 is subject to 3-methylthioaspartic acid. The disordered stretch occupies residues 104 to 124; sequence TAGVKDRRQSRSKYGAKAPKE.

The protein belongs to the universal ribosomal protein uS12 family. Part of the 30S ribosomal subunit. Contacts proteins S8 and S17. May interact with IF1 in the 30S initiation complex.

With S4 and S5 plays an important role in translational accuracy. Functionally, interacts with and stabilizes bases of the 16S rRNA that are involved in tRNA selection in the A site and with the mRNA backbone. Located at the interface of the 30S and 50S subunits, it traverses the body of the 30S subunit contacting proteins on the other side and probably holding the rRNA structure together. The combined cluster of proteins S8, S12 and S17 appears to hold together the shoulder and platform of the 30S subunit. The polypeptide is Small ribosomal subunit protein uS12 (Synechococcus sp. (strain CC9605)).